The chain runs to 57 residues: Small ribosomal subunit protein bS21 (57 aa).

The tract at residues 32-57 (VRKRKHFEKPSVKRKKKSEAARKRKF) is disordered. Residues 33–57 (RKRKHFEKPSVKRKKKSEAARKRKF) show a composition bias toward basic residues.

It belongs to the bacterial ribosomal protein bS21 family.

The protein is Small ribosomal subunit protein bS21 of Shouchella clausii (strain KSM-K16) (Alkalihalobacillus clausii).